The sequence spans 198 residues: Recombination protein RecR (198 aa).

Residues 57–72 (CSLCGNLDTVDPCHIC) form a C4-type zinc finger. The Toprim domain occupies 80–175 (GLICVVETVG…TVTRVGHGVP (96 aa)).

This sequence belongs to the RecR family.

In terms of biological role, may play a role in DNA repair. It seems to be involved in an RecBC-independent recombinational process of DNA repair. It may act with RecF and RecO. This is Recombination protein RecR from Gluconobacter oxydans (strain 621H) (Gluconobacter suboxydans).